The following is a 511-amino-acid chain: Lysine--tRNA ligase 2 (511 aa).

Over residues 1 to 11 (MTMEINNTDPS) the composition is skewed to polar residues. Residues 1 to 21 (MTMEINNTDPSENMPLPDDVD) are disordered. 2 residues coordinate Mg(2+): glutamate 421 and glutamate 428.

It belongs to the class-II aminoacyl-tRNA synthetase family. As to quaternary structure, homodimer. Requires Mg(2+) as cofactor.

It is found in the cytoplasm. The catalysed reaction is tRNA(Lys) + L-lysine + ATP = L-lysyl-tRNA(Lys) + AMP + diphosphate. The protein is Lysine--tRNA ligase 2 of Methanosarcina acetivorans (strain ATCC 35395 / DSM 2834 / JCM 12185 / C2A).